The chain runs to 239 residues: 1-(5-phosphoribosyl)-5-[(5-phosphoribosylamino)methylideneamino] imidazole-4-carboxamide isomerase (239 aa).

Asp8 (proton acceptor) is an active-site residue. Residue Asp129 is the Proton donor of the active site.

It belongs to the HisA/HisF family.

The protein localises to the cytoplasm. It catalyses the reaction 1-(5-phospho-beta-D-ribosyl)-5-[(5-phospho-beta-D-ribosylamino)methylideneamino]imidazole-4-carboxamide = 5-[(5-phospho-1-deoxy-D-ribulos-1-ylimino)methylamino]-1-(5-phospho-beta-D-ribosyl)imidazole-4-carboxamide. It functions in the pathway amino-acid biosynthesis; L-histidine biosynthesis; L-histidine from 5-phospho-alpha-D-ribose 1-diphosphate: step 4/9. This Bacillus thuringiensis (strain Al Hakam) protein is 1-(5-phosphoribosyl)-5-[(5-phosphoribosylamino)methylideneamino] imidazole-4-carboxamide isomerase.